A 327-amino-acid chain; its full sequence is Phenylalanine--tRNA ligase alpha subunit (327 aa).

Position 252 (Glu-252) interacts with Mg(2+).

Belongs to the class-II aminoacyl-tRNA synthetase family. Phe-tRNA synthetase alpha subunit type 1 subfamily. Tetramer of two alpha and two beta subunits. Mg(2+) serves as cofactor.

The protein localises to the cytoplasm. It catalyses the reaction tRNA(Phe) + L-phenylalanine + ATP = L-phenylalanyl-tRNA(Phe) + AMP + diphosphate + H(+). The polypeptide is Phenylalanine--tRNA ligase alpha subunit (Glaesserella parasuis serovar 5 (strain SH0165) (Haemophilus parasuis)).